Reading from the N-terminus, the 150-residue chain is Large-conductance mechanosensitive channel (150 aa).

2 consecutive transmembrane segments (helical) span residues 14–34 (VIDL…VTSF) and 81–101 (GVFL…FLVV).

The protein belongs to the MscL family. Homopentamer.

The protein resides in the cell membrane. Functionally, channel that opens in response to stretch forces in the membrane lipid bilayer. May participate in the regulation of osmotic pressure changes within the cell. The chain is Large-conductance mechanosensitive channel from Syntrophomonas wolfei subsp. wolfei (strain DSM 2245B / Goettingen).